The primary structure comprises 639 residues: Bucky ball (639 aa).

Basic and acidic residues predominate over residues Ala178–Val187. Disordered regions lie at residues Ala178–Gly205, Leu218–Thr242, and Arg581–Tyr614. Residues Arg189–Gly205 are compositionally biased toward polar residues. Positions Glu225–Pro240 are enriched in acidic residues. A compositionally biased stretch (polar residues) spans Arg584–Gly593. Residues Pro596 to Arg609 show a composition bias toward basic residues. Residues Arg627 and Arg629 each carry the symmetric dimethylarginine modification. 3 consecutive short sequence motifs (RG Motif) follow at residues Arg627–Gly628, Arg629–Gly630, and Arg635–Gly636.

In terms of assembly, specifically interacts (when methylated) with tdrd6 (via Tudor domain); interaction is responsible for recruitment of different protein complexes to germ plasm. Interacts with rbpms2 and dazl; interaction mediates Balbiani body formation. Interacts with kif5ba; interaction leads to buc enrichment at the embryonic cleavage furrows and mediates dorsoventral patterning. Symmetric dimethylarginine modification promotes interaction with tdrd6.

The protein resides in the cytoplasm. Its subcellular location is the cleavage furrow. In terms of biological role, prion-like protein required for the formation of Balbiani body (electron-dense aggregates in the oocyte) and germ plasm assembly, and for the establishment of oocyte polarity during early oogenesis. Mobility and aggregation properties are improved by tudor domain-containing protein tdrd6 through interaction with dimethylated arginines Tri-RG domains. Establishes oocyte polarity through interactions with RNA-binding proteins rbpms2 and dazl, initiating a positive feedback loop amplification mechanism in the Balbiani body. Interaction of BUC protein and mRNA with rbpms2 and dazl is required to mediate Balbiani body formation. Involved in recruitment of germ plasm to embryonic cleavage furrows and dorsoventral patterning through interaction with Kinesin-1/KIF5BA. This Danio rerio (Zebrafish) protein is Bucky ball.